The chain runs to 310 residues: Deoxyribonuclease gamma (310 aa).

The signal sequence occupies residues 1–25; sequence MSLHPASPRLASLLLFILALHDTLA. Residues 40–56 carry the Bipartite nuclear localization signal motif; it reads KKENHEAMDIIVKIIKR. Active-site residues include E105 and H160. C199 and C236 are oxidised to a cystine. Positions 289–310 are not required for free DNA-nuclease activity but required for activity towards liposome-coated DNA; sequence SRAFTNNRKSVSLKKRKKGNRS. The Nuclear localization signal signature appears at 301–307; the sequence is LKKRKKG.

Belongs to the DNase I family. Ca(2+) is required as a cofactor. The cofactor is Mg(2+). Post-translationally, poly-ADP-ribosylated by PARP1. ADP-ribosylation negatively regulates enzymatic activity during apoptosis. Expressed at high levels in liver, spleen and testes. Expressed at lower levels in heart, lungs, skeletal muscle and kidney. Not expressed in brain. Predominantly expressed in macrophages; at protein level. Secreted by mononuclear phagocytes.

It localises to the nucleus. The protein localises to the endoplasmic reticulum. The protein resides in the secreted. Its activity is regulated as follows. Inhibited by zinc. Inhibited by heparin and proteolysis by plasmin. In terms of biological role, has DNA hydrolytic activity. Is capable of both single- and double-stranded DNA cleavage, producing DNA fragments with 3'-OH ends. Can cleave chromatin to nucleosomal units and cleaves nucleosomal and liposome-coated DNA. Acts in internucleosomal DNA fragmentation (INDF) during apoptosis and necrosis. The role in apoptosis includes myogenic and neuronal differentiation, and BCR-mediated clonal deletion of self-reactive B cells. Is active on chromatin in apoptotic cell-derived membrane-coated microparticles and thus suppresses anti-DNA autoimmunity. Together with DNASE1, plays a key role in degrading neutrophil extracellular traps (NETs). NETs are mainly composed of DNA fibers and are released by neutrophils to bind pathogens during inflammation. Degradation of intravascular NETs by DNASE1 and DNASE1L3 is required to prevent formation of clots that obstruct blood vessels and cause organ damage following inflammation. In Mus musculus (Mouse), this protein is Deoxyribonuclease gamma.